A 310-amino-acid polypeptide reads, in one-letter code: UDP-N-acetylenolpyruvoylglucosamine reductase (310 aa).

An FAD-binding PCMH-type domain is found at 27–192; it reads KIGGKARYIV…LKATFRLQYA (166 aa). Residue arginine 171 is part of the active site. Serine 223 functions as the Proton donor in the catalytic mechanism. Residue glutamate 293 is part of the active site.

Belongs to the MurB family. FAD serves as cofactor.

The protein resides in the cytoplasm. It carries out the reaction UDP-N-acetyl-alpha-D-muramate + NADP(+) = UDP-N-acetyl-3-O-(1-carboxyvinyl)-alpha-D-glucosamine + NADPH + H(+). It functions in the pathway cell wall biogenesis; peptidoglycan biosynthesis. Cell wall formation. The polypeptide is UDP-N-acetylenolpyruvoylglucosamine reductase (Caldicellulosiruptor saccharolyticus (strain ATCC 43494 / DSM 8903 / Tp8T 6331)).